Reading from the N-terminus, the 455-residue chain is Chromosomal replication initiator protein DnaA (455 aa).

The domain I, interacts with DnaA modulators stretch occupies residues 1-73 (MTISPQYIWN…LEEVETIVGY (73 aa)). Positions 73–114 (YPIAVKLTTSQEQNLRIVDKNKDNLSSTKLQNKRQQESPKLN) are domain II. The segment at 115–331 (QLNPRYNFSR…GALIRAVTYI (217 aa)) is domain III, AAA+ region. ATP is bound by residues G159, G161, K162, and T163. The domain IV, binds dsDNA stretch occupies residues 332 to 455 (SISGLSMTVE…RINIASRNQN (124 aa)).

It belongs to the DnaA family. As to quaternary structure, oligomerizes as a right-handed, spiral filament on DNA at oriC.

The protein resides in the cytoplasm. Plays an essential role in the initiation and regulation of chromosomal replication. ATP-DnaA binds to the origin of replication (oriC) to initiate formation of the DNA replication initiation complex once per cell cycle. Binds the DnaA box (a 9 base pair repeat at the origin) and separates the double-stranded (ds)DNA. Forms a right-handed helical filament on oriC DNA; dsDNA binds to the exterior of the filament while single-stranded (ss)DNA is stabiized in the filament's interior. The ATP-DnaA-oriC complex binds and stabilizes one strand of the AT-rich DNA unwinding element (DUE), permitting loading of DNA polymerase. After initiation quickly degrades to an ADP-DnaA complex that is not apt for DNA replication. Binds acidic phospholipids. The protein is Chromosomal replication initiator protein DnaA of Crocosphaera subtropica (strain ATCC 51142 / BH68) (Cyanothece sp. (strain ATCC 51142)).